The chain runs to 250 residues: Small ribosomal subunit protein uS2 (250 aa).

A disordered region spans residues 226-250; it reads DQQNRQELGEDLGAAVEPAAEEALA. Residues 239–250 are compositionally biased toward low complexity; it reads AAVEPAAEEALA.

It belongs to the universal ribosomal protein uS2 family.

The protein is Small ribosomal subunit protein uS2 (rpsB) of Zymomonas mobilis subsp. mobilis (strain ATCC 31821 / ZM4 / CP4).